A 120-amino-acid chain; its full sequence is Large ribosomal subunit protein uL18 (120 aa).

It belongs to the universal ribosomal protein uL18 family. In terms of assembly, part of the 50S ribosomal subunit; part of the 5S rRNA/L5/L18/L25 subcomplex. Contacts the 5S and 23S rRNAs.

In terms of biological role, this is one of the proteins that bind and probably mediate the attachment of the 5S RNA into the large ribosomal subunit, where it forms part of the central protuberance. This is Large ribosomal subunit protein uL18 from Bradyrhizobium sp. (strain BTAi1 / ATCC BAA-1182).